A 334-amino-acid polypeptide reads, in one-letter code: Ornithine carbamoyltransferase (334 aa).

Carbamoyl phosphate contacts are provided by residues 56–59 (STRT), Gln-83, Arg-107, and 134–137 (HPTQ). L-ornithine-binding positions include Asn-168, Asp-232, and 236-237 (SM). Residues 274 to 275 (CL) and Arg-320 contribute to the carbamoyl phosphate site.

It belongs to the aspartate/ornithine carbamoyltransferase superfamily. OTCase family.

The protein resides in the cytoplasm. It carries out the reaction carbamoyl phosphate + L-ornithine = L-citrulline + phosphate + H(+). It functions in the pathway amino-acid biosynthesis; L-arginine biosynthesis; L-arginine from L-ornithine and carbamoyl phosphate: step 1/3. Reversibly catalyzes the transfer of the carbamoyl group from carbamoyl phosphate (CP) to the N(epsilon) atom of ornithine (ORN) to produce L-citrulline. In Escherichia coli O45:K1 (strain S88 / ExPEC), this protein is Ornithine carbamoyltransferase.